A 115-amino-acid polypeptide reads, in one-letter code: U3-lycotoxin-Ls1g (115 aa).

The signal sequence occupies residues 1 to 20; that stretch reads MKFVLLFGVFLVTLFSYSSA. Positions 21–44 are excised as a propeptide; that stretch reads EMLDDFDQADEDELLSLIEKEEAR. Intrachain disulfides connect Cys-48–Cys-63, Cys-55–Cys-72, Cys-62–Cys-87, and Cys-74–Cys-85.

This sequence belongs to the neurotoxin 19 (CSTX) family. 01 subfamily. In terms of tissue distribution, expressed by the venom gland.

The protein resides in the secreted. The sequence is that of U3-lycotoxin-Ls1g from Lycosa singoriensis (Wolf spider).